Consider the following 203-residue polypeptide: Undecaprenyl phosphate transporter A (203 aa).

The next 5 helical transmembrane spans lie at 16–36, 48–68, 108–128, 137–157, and 173–193; these read AIFI…EIIL, LSIL…LLIL, YGVW…LITI, VVTF…GLIL, and LHTY…YFAI.

It belongs to the DedA family.

The protein resides in the cell membrane. Functionally, flippase that catalyzes the transport of undecaprenyl phosphate (UndP) across the cytoplasmic membrane, from the external side to the cytoplasmic side. Is involved in UndP recycling during peptidoglycan synthesis. This chain is Undecaprenyl phosphate transporter A, found in Staphylococcus aureus (strain NCTC 8325 / PS 47).